A 150-amino-acid chain; its full sequence is Large ribosomal subunit protein uL15 (150 aa).

The tract at residues 1 to 52 (MDLSNLKPAEGSVRKNSKRIGRGEGSGKGGTATRGHKGAKSRSGYSKKIGFE) is disordered. Positions 23 to 32 (GEGSGKGGTA) are enriched in gly residues.

Belongs to the universal ribosomal protein uL15 family. In terms of assembly, part of the 50S ribosomal subunit.

Binds to the 23S rRNA. This Christiangramia forsetii (strain DSM 17595 / CGMCC 1.15422 / KT0803) (Gramella forsetii) protein is Large ribosomal subunit protein uL15.